The following is a 437-amino-acid chain: Histidinol dehydrogenase (437 aa).

Positions 137, 199, and 222 each coordinate NAD(+). Substrate is bound by residues Ser245, Gln267, and His270. Gln267 and His270 together coordinate Zn(2+). Catalysis depends on proton acceptor residues Glu335 and His336. Substrate contacts are provided by His336, Asp369, Glu423, and His428. Asp369 provides a ligand contact to Zn(2+). Residue His428 coordinates Zn(2+).

It belongs to the histidinol dehydrogenase family. Requires Zn(2+) as cofactor.

The catalysed reaction is L-histidinol + 2 NAD(+) + H2O = L-histidine + 2 NADH + 3 H(+). The protein operates within amino-acid biosynthesis; L-histidine biosynthesis; L-histidine from 5-phospho-alpha-D-ribose 1-diphosphate: step 9/9. Its function is as follows. Catalyzes the sequential NAD-dependent oxidations of L-histidinol to L-histidinaldehyde and then to L-histidine. This Parasynechococcus marenigrum (strain WH8102) protein is Histidinol dehydrogenase.